The chain runs to 54 residues: MGSATVLEVILAIILPPVGVFLRYKLGVEFWICLLLTILGYIPGIIYAVYVLVV.

The next 2 membrane-spanning stretches (helical) occupy residues 2–22 (GSATVLEVILAIILPPVGVFL) and 34–54 (LLLTILGYIPGIIYAVYVLVV).

The protein belongs to the UPF0057 (PMP3) family.

Its subcellular location is the membrane. This Thinopyrum elongatum (Tall wheatgrass) protein is Salt stress-induced hydrophobic peptide ESI3 (ESI3).